A 149-amino-acid chain; its full sequence is Nucleoside diphosphate kinase (149 aa).

Residues Lys-9, Phe-57, Arg-85, Thr-91, Arg-102, and Asn-112 each contribute to the ATP site. His-115 (pros-phosphohistidine intermediate) is an active-site residue.

This sequence belongs to the NDK family. As to quaternary structure, homotetramer. It depends on Mg(2+) as a cofactor.

It is found in the cytoplasm. The enzyme catalyses a 2'-deoxyribonucleoside 5'-diphosphate + ATP = a 2'-deoxyribonucleoside 5'-triphosphate + ADP. It carries out the reaction a ribonucleoside 5'-diphosphate + ATP = a ribonucleoside 5'-triphosphate + ADP. Functionally, major role in the synthesis of nucleoside triphosphates other than ATP. The ATP gamma phosphate is transferred to the NDP beta phosphate via a ping-pong mechanism, using a phosphorylated active-site intermediate. In Acaryochloris marina (strain MBIC 11017), this protein is Nucleoside diphosphate kinase.